The chain runs to 297 residues: MLSTIFGSVCSIDLKIDADDNKKFAFLRKDKKGEKCPIFSDGEDINGTATISLKPGKKFEHYGIKLELIGQINILNDKANSYDFFSISKDLEPPGFLVESKQFKWKFSAVDKQHESYFGTNVQLRYFVRLNIIKGYSGNIQKEIDFIVQNLCIPPEINNTIKMEVGIEDCLHIEFEYDKSKYHLKDVVVGKVYFLLVRIKIKHMELDIIKMETSGVGKNYTTETVTLSKFEIMDGSPIKSECIPVRLYLSGFDLTPTYKNIQNKFSVKYYINLIIVDEEERRYFKKQEIFLWRKKMG.

It belongs to the VPS26 family. As to quaternary structure, component of the retromer complex, composed of VPS26, VPS29 and VPS35. As part of the retromer complex, interacts with the sorting receptor SORTLR/sortilin. Interacts with GTPase RAB7.

In terms of biological role, plays a role in vesicular protein sorting. Component of the membrane-associated retromer complex which is essential in endosome-to-Golgi retrograde transport. This chain is Vacuolar protein sorting-associated protein 26, found in Plasmodium falciparum (isolate 3D7).